Reading from the N-terminus, the 203-residue chain is Dephospho-CoA kinase (203 aa).

The region spanning 6-203 (KVAITGGLSC…ELYQELKIYI (198 aa)) is the DPCK domain. 14-19 (SCGKSS) lines the ATP pocket.

It belongs to the CoaE family.

Its subcellular location is the cytoplasm. It carries out the reaction 3'-dephospho-CoA + ATP = ADP + CoA + H(+). The protein operates within cofactor biosynthesis; coenzyme A biosynthesis; CoA from (R)-pantothenate: step 5/5. Functionally, catalyzes the phosphorylation of the 3'-hydroxyl group of dephosphocoenzyme A to form coenzyme A. The chain is Dephospho-CoA kinase from Protochlamydia amoebophila (strain UWE25).